We begin with the raw amino-acid sequence, 294 residues long: 4-hydroxy-tetrahydrodipicolinate synthase (294 aa).

T47 provides a ligand contact to pyruvate. The active-site Proton donor/acceptor is Y135. The Schiff-base intermediate with substrate role is filled by K163. T205 is a binding site for pyruvate.

It belongs to the DapA family. Homotetramer; dimer of dimers.

It localises to the cytoplasm. The catalysed reaction is L-aspartate 4-semialdehyde + pyruvate = (2S,4S)-4-hydroxy-2,3,4,5-tetrahydrodipicolinate + H2O + H(+). The protein operates within amino-acid biosynthesis; L-lysine biosynthesis via DAP pathway; (S)-tetrahydrodipicolinate from L-aspartate: step 3/4. Functionally, catalyzes the condensation of (S)-aspartate-beta-semialdehyde [(S)-ASA] and pyruvate to 4-hydroxy-tetrahydrodipicolinate (HTPA). This Rickettsia rickettsii protein is 4-hydroxy-tetrahydrodipicolinate synthase.